Here is a 652-residue protein sequence, read N- to C-terminus: DNA mismatch repair protein MutL (652 aa).

Disordered stretches follow at residues 357–377 (LGAN…NYPS) and 425–457 (PDKG…NSTD). The span at 365 to 375 (SHSSNTPTLNY) shows a compositional bias: polar residues.

Belongs to the DNA mismatch repair MutL/HexB family.

In terms of biological role, this protein is involved in the repair of mismatches in DNA. It is required for dam-dependent methyl-directed DNA mismatch repair. May act as a 'molecular matchmaker', a protein that promotes the formation of a stable complex between two or more DNA-binding proteins in an ATP-dependent manner without itself being part of a final effector complex. This is DNA mismatch repair protein MutL from Colwellia psychrerythraea (strain 34H / ATCC BAA-681) (Vibrio psychroerythus).